Consider the following 180-residue polypeptide: uncharacterized protein (180 aa).

The 150-residue stretch at 31–180 (LLVRTAEWLR…HLFEKEITAE (150 aa)) folds into the N-acetyltransferase domain.

It belongs to the acetyltransferase family.

This is an uncharacterized protein from Bacillus subtilis (strain 168).